The sequence spans 797 residues: Probable DNA polymerase (797 aa).

The protein belongs to the DNA polymerase type-B family.

It is found in the mitochondrion. The enzyme catalyses DNA(n) + a 2'-deoxyribonucleoside 5'-triphosphate = DNA(n+1) + diphosphate. The chain is Probable DNA polymerase from Agaricus bitorquis (Pavement mushroom).